Consider the following 1576-residue polypeptide: MAERGLEPSPAAVAALPPEVRAQLAELELELSEGDITQKGYEKKRSKLLSPYSPQTQETDSAVQKELRNQTPAPSAAQTSAPSKYHRTRSGGARDERYRSDIHTEAVQAALAKHKEQKMALPMPTKRRSTFVQSPADACTPPDTSSASEDEGSLRRQAALSAALQQSLQNAESWINRSIQGSSTSSSASSTLSHGEVKGTSGSLADVFANTRIENFSAPPDVTTTTSSSSSSSSIRPANIDLPPSGIVKGMHKGSNRSSLMDTADGVPVSSRVSTKIQQLLNTLKRPKRPPLKEFFVDDSEEIVEVPQPDPNQPKPEGRQMTPVKGEPLGVICNWPPALESALQRWGTTQAKCSCLTALDMTGKPVYTLTYGKLWSRSLKLAYTLLNKLGTKNEPVLKPGDRVALVYPNNDPVMFMVAFYGCLLAEVIPVPIEVPLTRKDAGGQQIGFLLGSCGIALALTSEVCLKGLPKTQNGEIVQFKGWPRLKWVVTDSKYLSKPPKDWQPHISPAGTEPAYIEYKTSKEGSVMGVTVSRLAMLSHCQALSQACNYSEGETIVNVLDFKKDAGLWHGMFANVMNKMHTISVPYSVMKTCPLSWVQRVHAHKAKVALVKCRDLHWAMMAHRDQRDVSLSSLRMLIVTDGANPWSVSSCDAFLSLFQSHGLKPEAICPCATSAEAMTVAIRRPGVPGAPLPGRAILSMNGLSYGVIRVNTEDKNSALTVQDVGHVMPGGMMCIVKPDGPPQLCKTDEIGEICVSSRTGGMMYFGLAGVTKNTFEVIPVNSAGSPVGDVPFIRSGLLGFVGPGSLVFVVGKMDGLLMVSGRRHNADDIVATGLAVESIKTVYRGRIAVFSVSVFYDERIVVVAEQRPDASEEDSFQWMSRVLQAIDSIHQVGVYCLALVPANTLPKTPLGGIHISQTKQLFLEGSLHPCNILMCPHTCVTNLPKPRQKQPGVGPASVMVGNLVAGKRIAQAAGRDLGQIEENDLVRKHQFLAEILQWRAQATPDHVLFMLLNAKGTTVCTASCLQLHKRAERIASVLGDKGHLNAGDNVVLLYPPGIELIAAFYGCLYAGCIPVTVRPPHAQNLTATLPTVRMIVDVSKAACILTSQTLMRLLRSREAAAAVDVKTWPTIIDTDDLPRKRLPQLYKPPTPEMLAYLDFSVSTTGMLTGVKMSHSAVNALCRAIKLQCELYSSRQIAICLDPYCGLGFALWCLCSVYSGHQSVLIPPMELENNLFLWLSTVNQYKIRDTFCSYSVMELCTKGLGNQVEVLKTRGINLSCVRTCVVVAEERPRVALQQSFSKLFKDIGLSPRAVSTTFGSRVNVAICLQGTSGPDPTTVYVDLKSLRHDRVRLVERGAPQSLLLSESGKILPGVKVVIVNPETKGPVGDSHLGEIWVNSPHTASGYYTIYDSETLQADHFNTRLSFGDAAQTLWARTGYLGFVRRTELTAATGERHDALYVVGALDETLELRGLRYHPIDIETSVSRIHRSIAECAVFTWTNLLVVVVELCGSEQEALDLVPLVTNVVLEEHYLIVGVVVVVDPGVIPINSRGEKQRMHLRDSFLADQLDPIYVAYNM.

Ser-9, Ser-50, and Ser-53 each carry phosphoserine. The region spanning 12 to 131 (AVAALPPEVR…PMPTKRRSTF (120 aa)) is the DMAP1-binding domain. Positions 31-167 (LSEGDITQKG…AALSAALQQS (137 aa)) are disordered. Over residues 52–62 (YSPQTQETDSA) the composition is skewed to polar residues. A compositionally biased stretch (low complexity) spans 70-83 (QTPAPSAAQTSAPS). Thr-71 carries the post-translational modification Phosphothreonine. The segment covering 92-104 (GARDERYRSDIHT) has biased composition (basic and acidic residues). At Ser-100 the chain carries Phosphoserine. Thr-140 is modified (phosphothreonine). Ser-146, Ser-148, and Ser-153 each carry phosphoserine. Residues 155-167 (RRQAALSAALQQS) show a composition bias toward low complexity. 3 positions are modified to phosphoserine: Ser-178, Ser-193, and Ser-203. Residues 179–201 (IQGSSTSSSASSTLSHGEVKGTS) form a disordered region. Residues 182 to 193 (SSTSSSASSTLS) are compositionally biased toward low complexity. The segment at 217–246 (SAPPDVTTTTSSSSSSSSIRPANIDLPPSG) is disordered. Positions 223-234 (TTTTSSSSSSSS) are enriched in low complexity. Phosphoserine is present on Ser-259.

The protein belongs to the DIP2 family. As to quaternary structure, interacts with alpha-tubulin. In terms of tissue distribution, moderately expressed in adult brain, placenta, skeletal muscle, heart, kidney, pancreas, lung, spleen and colon. Expression was weaker in adult liver, kidney, spleen, and ovary, and in fetal brain and liver. In the brain, it is expressed in the cerebral cortex; the frontal, parietal, occipital and temporal lobes; the paracentral gyrus; the pons; the corpus callosum and the hippocampus. Highest expression levels in the brain were found in the cerebral cortex and the frontal and parietal lobes.

The protein localises to the cell projection. It is found in the dendrite. Its subcellular location is the axon. It localises to the perikaryon. Negatively regulates axonal outgrowth and is essential for normal synaptic transmission. Not required for regulation of axon polarity. Promotes acetylation of alpha-tubulin. This Homo sapiens (Human) protein is Disco-interacting protein 2 homolog B (DIP2B).